We begin with the raw amino-acid sequence, 92 residues long: Small ribosomal subunit protein uS19c (92 aa).

This sequence belongs to the universal ribosomal protein uS19 family.

It localises to the plastid. The protein localises to the chloroplast. In terms of biological role, protein S19 forms a complex with S13 that binds strongly to the 16S ribosomal RNA. This chain is Small ribosomal subunit protein uS19c, found in Oedogonium cardiacum (Filamentous green alga).